Consider the following 62-residue polypeptide: DNA-binding protein 7b (62 aa).

It belongs to the 7 kDa DNA-binding/endoribonuclease P2 family. Monomer.

It localises to the cytoplasm. Its function is as follows. Can constrain negative DNA supercoils. May be involved in maintaining the integrity of the genome at high temperature. The protein is DNA-binding protein 7b of Acidianus hospitalis (strain W1).